Reading from the N-terminus, the 228-residue chain is 2,3-bisphosphoglycerate-dependent phosphoglycerate mutase (228 aa).

Substrate contacts are provided by residues Arg-8–Asn-15, Thr-21–Gly-22, Arg-60, Glu-87–Tyr-90, Lys-98, Arg-114–Arg-115, and Gly-180–Asn-181. The active-site Tele-phosphohistidine intermediate is His-9. Catalysis depends on Glu-87, which acts as the Proton donor/acceptor.

Belongs to the phosphoglycerate mutase family. BPG-dependent PGAM subfamily. As to quaternary structure, homodimer.

The enzyme catalyses (2R)-2-phosphoglycerate = (2R)-3-phosphoglycerate. It functions in the pathway carbohydrate degradation; glycolysis; pyruvate from D-glyceraldehyde 3-phosphate: step 3/5. In terms of biological role, catalyzes the interconversion of 2-phosphoglycerate and 3-phosphoglycerate. The chain is 2,3-bisphosphoglycerate-dependent phosphoglycerate mutase from Novosphingobium aromaticivorans (strain ATCC 700278 / DSM 12444 / CCUG 56034 / CIP 105152 / NBRC 16084 / F199).